The chain runs to 497 residues: Bifunctional protein GlmU (497 aa).

The pyrophosphorylase stretch occupies residues 1-241; it reads MSPETIGPAA…RWQVEGANDR (241 aa). Residues 14-17, lysine 28, glutamine 81, 86-87, 112-114, glycine 151, glutamate 166, asparagine 181, and asparagine 239 contribute to the UDP-N-acetyl-alpha-D-glucosamine site; these read LAAG, GT, and YGD. Aspartate 114 lines the Mg(2+) pocket. Asparagine 239 provides a ligand contact to Mg(2+). The interval 242-262 is linker; the sequence is IQLSALAAEHNRRIIESWMRA. The tract at residues 263–497 is N-acetyltransferase; the sequence is GVTVVDPATT…QATIEEGKQA (235 aa). Arginine 344 and lysine 362 together coordinate UDP-N-acetyl-alpha-D-glucosamine. The active-site Proton acceptor is the histidine 374. Residues tyrosine 377 and asparagine 388 each coordinate UDP-N-acetyl-alpha-D-glucosamine. Acetyl-CoA-binding positions include 397–398, serine 416, and alanine 434; that span reads NY.

This sequence in the N-terminal section; belongs to the N-acetylglucosamine-1-phosphate uridyltransferase family. The protein in the C-terminal section; belongs to the transferase hexapeptide repeat family. Homotrimer. Mg(2+) serves as cofactor.

It is found in the cytoplasm. It catalyses the reaction alpha-D-glucosamine 1-phosphate + acetyl-CoA = N-acetyl-alpha-D-glucosamine 1-phosphate + CoA + H(+). The enzyme catalyses N-acetyl-alpha-D-glucosamine 1-phosphate + UTP + H(+) = UDP-N-acetyl-alpha-D-glucosamine + diphosphate. The protein operates within nucleotide-sugar biosynthesis; UDP-N-acetyl-alpha-D-glucosamine biosynthesis; N-acetyl-alpha-D-glucosamine 1-phosphate from alpha-D-glucosamine 6-phosphate (route II): step 2/2. It participates in nucleotide-sugar biosynthesis; UDP-N-acetyl-alpha-D-glucosamine biosynthesis; UDP-N-acetyl-alpha-D-glucosamine from N-acetyl-alpha-D-glucosamine 1-phosphate: step 1/1. It functions in the pathway bacterial outer membrane biogenesis; LPS lipid A biosynthesis. In terms of biological role, catalyzes the last two sequential reactions in the de novo biosynthetic pathway for UDP-N-acetylglucosamine (UDP-GlcNAc). The C-terminal domain catalyzes the transfer of acetyl group from acetyl coenzyme A to glucosamine-1-phosphate (GlcN-1-P) to produce N-acetylglucosamine-1-phosphate (GlcNAc-1-P), which is converted into UDP-GlcNAc by the transfer of uridine 5-monophosphate (from uridine 5-triphosphate), a reaction catalyzed by the N-terminal domain. This is Bifunctional protein GlmU from Paenarthrobacter aurescens (strain TC1).